A 485-amino-acid chain; its full sequence is MKAYVAVDIGASSGRLMLGQLEDGKLKLQEMHRFKNGFEFKNNHDRWNIDYLIDEIFKGLEKIKESGYTEVSLGIDTWAVDYVLVGKDGKKLQDPISYRDKRTSNSINELTTEVSKEYIYKKTGIQFLNFNTLYQLFEEDKELLKKTDKIMMIPDYIGYILTGKAVTEITNASTTQMLSLREGLFDKNLLEKVNVSSDQFAKLVDAGTVLGNLKEDWYSKYELPKVNVVTVATHDTASAVIGTPCEGQHWAYLSSGTWSLIGTELNIPENGAKVFKENYTNEWGAYGTYRFLKNIMGLWMAQCVKKELNDQYSFSELAELAGEVEPFEQFINVNDQRFQNPGNMIQEIQTYCRETGQKVPETPGEIMMAIYSNLALFYANEISKLDDIMGYHIDTLNIVGGGSNVALMNQLTSTIANVDVYAGPSEATAIGNILVQMITAGDVLNVYLGRRIISNSFDIKHYTPEQGKYSKVLAEYQQFLNKERG.

11–15 (ASSGR) serves as a coordination point for ATP. Substrate is bound by residues Ala79 and 234–236 (HDT). The active-site Proton acceptor is Asp235. Thr257 lines the ATP pocket. Asn294 is a substrate binding site. Positions 302 and 401 each coordinate ATP.

Belongs to the rhamnulokinase family. Mg(2+) is required as a cofactor.

It catalyses the reaction L-rhamnulose + ATP = L-rhamnulose 1-phosphate + ADP + H(+). It participates in carbohydrate degradation; L-rhamnose degradation; glycerone phosphate from L-rhamnose: step 2/3. Its function is as follows. Involved in the catabolism of L-rhamnose (6-deoxy-L-mannose). Catalyzes the transfer of the gamma-phosphate group from ATP to the 1-hydroxyl group of L-rhamnulose to yield L-rhamnulose 1-phosphate. The sequence is that of Rhamnulokinase from Ligilactobacillus salivarius (strain UCC118) (Lactobacillus salivarius).